The primary structure comprises 302 residues: Proteasome subunit beta (302 aa).

Basic and acidic residues predominate over residues 1–10 (MAGRVREVSH). A disordered region spans residues 1–21 (MAGRVREVSHSSDQSGRLPAA). Residues 1–67 (MAGRVREVSH…GPGAGEPPHA (67 aa)) constitute a propeptide, removed in mature form; by autocatalysis. Residue T68 is the Nucleophile of the active site. A disordered region spans residues 283-302 (RRGNPGGNPGISAVHGDGGN).

It belongs to the peptidase T1B family. The 20S proteasome core is composed of 14 alpha and 14 beta subunits that assemble into four stacked heptameric rings, resulting in a barrel-shaped structure. The two inner rings, each composed of seven catalytic beta subunits, are sandwiched by two outer rings, each composed of seven alpha subunits. The catalytic chamber with the active sites is on the inside of the barrel. Has a gated structure, the ends of the cylinder being occluded by the N-termini of the alpha-subunits. Is capped by the proteasome-associated ATPase, ARC.

Its subcellular location is the cytoplasm. It catalyses the reaction Cleavage of peptide bonds with very broad specificity.. It functions in the pathway protein degradation; proteasomal Pup-dependent pathway. Its activity is regulated as follows. The formation of the proteasomal ATPase ARC-20S proteasome complex, likely via the docking of the C-termini of ARC into the intersubunit pockets in the alpha-rings, may trigger opening of the gate for substrate entry. Interconversion between the open-gate and close-gate conformations leads to a dynamic regulation of the 20S proteasome proteolysis activity. In terms of biological role, component of the proteasome core, a large protease complex with broad specificity involved in protein degradation. This is Proteasome subunit beta from Kineococcus radiotolerans (strain ATCC BAA-149 / DSM 14245 / SRS30216).